The primary structure comprises 330 residues: Putative F-box protein At1g57690 (330 aa).

Residues 25 to 72 enclose the F-box domain; the sequence is VDIISSLPDVILQHILFSFQTKYAIRTSVLSKRWRHEADAINKALSQY.

The chain is Putative F-box protein At1g57690 from Arabidopsis thaliana (Mouse-ear cress).